The following is a 528-amino-acid chain: Phosphoenolpyruvate carboxykinase (ATP) (528 aa).

3 residues coordinate substrate: R56, Y192, and K198. Residues K198, H217, and 233–241 each bind ATP; that span reads GLSGTGKTT. 2 residues coordinate Mn(2+): K198 and H217. Mn(2+) is bound at residue D254. ATP-binding residues include E282, R319, and T444. R319 serves as a coordination point for substrate.

It belongs to the phosphoenolpyruvate carboxykinase (ATP) family. Mn(2+) is required as a cofactor.

The protein resides in the cytoplasm. It catalyses the reaction oxaloacetate + ATP = phosphoenolpyruvate + ADP + CO2. It functions in the pathway carbohydrate biosynthesis; gluconeogenesis. Its function is as follows. Involved in the gluconeogenesis. Catalyzes the conversion of oxaloacetate (OAA) to phosphoenolpyruvate (PEP) through direct phosphoryl transfer between the nucleoside triphosphate and OAA. In Bacillus anthracis (strain A0248), this protein is Phosphoenolpyruvate carboxykinase (ATP).